We begin with the raw amino-acid sequence, 349 residues long: Fe(3+) ions import ATP-binding protein FbpC (349 aa).

An ABC transporter domain is found at 4 to 236 (LDFNKIGKSY…PIDEPTATFL (233 aa)). ATP is bound at residue 36 to 43 (GPSGSGKT).

The protein belongs to the ABC transporter superfamily. Fe(3+) ion importer (TC 3.A.1.10) family. As to quaternary structure, the complex is composed of two ATP-binding proteins (FbpC), two transmembrane proteins (FbpB) and a solute-binding protein (FbpA).

The protein localises to the cell inner membrane. It carries out the reaction Fe(3+)(out) + ATP + H2O = Fe(3+)(in) + ADP + phosphate + H(+). Its function is as follows. Part of the ABC transporter complex FbpABC involved in Fe(3+) ions import. Responsible for energy coupling to the transport system. The sequence is that of Fe(3+) ions import ATP-binding protein FbpC from Yersinia enterocolitica.